A 798-amino-acid polypeptide reads, in one-letter code: Phenylalanine--tRNA ligase beta subunit (798 aa).

The region spanning 39 to 147 (AARLAGFTLA…PSGEVGERFI (109 aa)) is the tRNA-binding domain. The B5 domain maps to 404–475 (DHSRAYKLDA…RIASLTKLVG (72 aa)). Positions 453, 459, 462, and 463 each coordinate Mg(2+). The FDX-ACB domain occupies 704 to 797 (RDLQAVERDF…VAKATGGTLR (94 aa)).

The protein belongs to the phenylalanyl-tRNA synthetase beta subunit family. Type 1 subfamily. As to quaternary structure, tetramer of two alpha and two beta subunits. Mg(2+) is required as a cofactor.

Its subcellular location is the cytoplasm. It carries out the reaction tRNA(Phe) + L-phenylalanine + ATP = L-phenylalanyl-tRNA(Phe) + AMP + diphosphate + H(+). This Ruegeria pomeroyi (strain ATCC 700808 / DSM 15171 / DSS-3) (Silicibacter pomeroyi) protein is Phenylalanine--tRNA ligase beta subunit.